We begin with the raw amino-acid sequence, 444 residues long: Type VI secretion system baseplate component TssK1 (444 aa).

As to quaternary structure, forms transient higher-order structures that correlated with dynamics of sheath component TssB1. Interacts with TssA1.

Its function is as follows. Core component of the H1 type VI (H1-T6SS) secretion system that plays a role in the release of toxins targeting both eukaryotic and prokaryotic species. Functions as a spatio-temporal marker for assembly of contractile apparatus made of TssB1 and TssC1. This role in assembly depends on TssM1. This chain is Type VI secretion system baseplate component TssK1, found in Pseudomonas aeruginosa (strain ATCC 15692 / DSM 22644 / CIP 104116 / JCM 14847 / LMG 12228 / 1C / PRS 101 / PAO1).